The primary structure comprises 205 residues: High frequency lysogenization protein HflD homolog (205 aa).

Belongs to the HflD family.

It is found in the cytoplasm. The protein localises to the cell inner membrane. The protein is High frequency lysogenization protein HflD homolog of Vibrio cholerae serotype O1 (strain ATCC 39541 / Classical Ogawa 395 / O395).